Here is a 195-residue protein sequence, read N- to C-terminus: Imidazoleglycerol-phosphate dehydratase (195 aa).

It belongs to the imidazoleglycerol-phosphate dehydratase family.

The protein resides in the cytoplasm. The enzyme catalyses D-erythro-1-(imidazol-4-yl)glycerol 3-phosphate = 3-(imidazol-4-yl)-2-oxopropyl phosphate + H2O. The protein operates within amino-acid biosynthesis; L-histidine biosynthesis; L-histidine from 5-phospho-alpha-D-ribose 1-diphosphate: step 6/9. This Polynucleobacter asymbioticus (strain DSM 18221 / CIP 109841 / QLW-P1DMWA-1) (Polynucleobacter necessarius subsp. asymbioticus) protein is Imidazoleglycerol-phosphate dehydratase.